The primary structure comprises 1089 residues: Probable transport protein MmpL8 (1089 aa).

Positions Met-1–Thr-26 are disordered. 12 helical membrane passes run Trp-44 to Leu-64, Ile-222 to Leu-242, Leu-257 to Ser-277, Ile-316 to Phe-336, Leu-349 to Val-369, Lys-400 to Ala-420, Ala-555 to Gly-575, Ile-874 to Val-894, Tyr-898 to Phe-918, Ile-930 to Ile-950, Gly-973 to Ala-993, and Gly-996 to Val-1016. The tract at residues Arg-1056–Leu-1078 is disordered. Residues Glu-1066–Leu-1078 show a composition bias toward acidic residues.

The protein belongs to the resistance-nodulation-cell division (RND) (TC 2.A.6) family. MmpL subfamily.

Its subcellular location is the cell membrane. The sequence is that of Probable transport protein MmpL8 (mmpL8) from Mycobacterium bovis (strain ATCC BAA-935 / AF2122/97).